The sequence spans 104 residues: Large ribosomal subunit protein bL21 (104 aa).

This sequence belongs to the bacterial ribosomal protein bL21 family. In terms of assembly, part of the 50S ribosomal subunit. Contacts protein L20.

Functionally, this protein binds to 23S rRNA in the presence of protein L20. This chain is Large ribosomal subunit protein bL21, found in Opitutus terrae (strain DSM 11246 / JCM 15787 / PB90-1).